Consider the following 390-residue polypeptide: Chorismate synthase 1 (390 aa).

Residues Arg-39 and Arg-45 each contribute to the NADP(+) site. Residues 95 to 117 (EQEEKEMKRKVTKPRPGHADLNG) are disordered. Residues 132–134 (RSS), 253–254 (NA), Gly-298, 313–317 (KPIPT), and Arg-339 each bind FMN.

The protein belongs to the chorismate synthase family. As to quaternary structure, homotetramer. It depends on FMNH2 as a cofactor.

It carries out the reaction 5-O-(1-carboxyvinyl)-3-phosphoshikimate = chorismate + phosphate. The protein operates within metabolic intermediate biosynthesis; chorismate biosynthesis; chorismate from D-erythrose 4-phosphate and phosphoenolpyruvate: step 7/7. Functionally, catalyzes the anti-1,4-elimination of the C-3 phosphate and the C-6 proR hydrogen from 5-enolpyruvylshikimate-3-phosphate (EPSP) to yield chorismate, which is the branch point compound that serves as the starting substrate for the three terminal pathways of aromatic amino acid biosynthesis. This reaction introduces a second double bond into the aromatic ring system. The protein is Chorismate synthase 1 of Bacillus cereus (strain ATCC 10987 / NRS 248).